Consider the following 549-residue polypeptide: Hydroxylamine reductase (549 aa).

The [4Fe-4S] cluster site is built by cysteine 5, cysteine 8, cysteine 17, and cysteine 23. Hybrid [4Fe-2O-2S] cluster is bound by residues histidine 244, glutamate 268, cysteine 312, cysteine 403, cysteine 431, cysteine 456, glutamate 491, and lysine 493. Cysteine 403 carries the post-translational modification Cysteine persulfide.

It belongs to the HCP family. It depends on [4Fe-4S] cluster as a cofactor. Hybrid [4Fe-2O-2S] cluster is required as a cofactor.

The protein resides in the cytoplasm. The enzyme catalyses A + NH4(+) + H2O = hydroxylamine + AH2 + H(+). Its function is as follows. Catalyzes the reduction of hydroxylamine to form NH(3) and H(2)O. The sequence is that of Hydroxylamine reductase from Clostridium perfringens (strain 13 / Type A).